An 88-amino-acid chain; its full sequence is Large ribosomal subunit protein eL34 (88 aa).

Belongs to the eukaryotic ribosomal protein eL34 family.

In Saccharolobus solfataricus (strain ATCC 35092 / DSM 1617 / JCM 11322 / P2) (Sulfolobus solfataricus), this protein is Large ribosomal subunit protein eL34.